Here is a 107-residue protein sequence, read N- to C-terminus: Metallothionein-1 (107 aa).

A propeptide spanning residues 1 to 2 (MD) is cleaved from the precursor.

It belongs to the metallothionein superfamily. Type 7 family.

In terms of biological role, the metallothioneins are involved in the cellular sequestration of toxic metal ions. Binds 12 cadmium ions per molecule. This chain is Metallothionein-1, found in Tetrahymena pyriformis.